A 732-amino-acid polypeptide reads, in one-letter code: Elongation factor 2 (732 aa).

A tr-type G domain is found at 19–260 (ERIRNIGIAA…MVVRHLPSPI (242 aa)). Residues 28-35 (AHIDHGKT), 94-98 (DTPGH), and 148-151 (NKVD) contribute to the GTP site. At H597 the chain carries Diphthamide.

Belongs to the TRAFAC class translation factor GTPase superfamily. Classic translation factor GTPase family. EF-G/EF-2 subfamily.

It localises to the cytoplasm. Functionally, catalyzes the GTP-dependent ribosomal translocation step during translation elongation. During this step, the ribosome changes from the pre-translocational (PRE) to the post-translocational (POST) state as the newly formed A-site-bound peptidyl-tRNA and P-site-bound deacylated tRNA move to the P and E sites, respectively. Catalyzes the coordinated movement of the two tRNA molecules, the mRNA and conformational changes in the ribosome. In Pyrococcus furiosus (strain ATCC 43587 / DSM 3638 / JCM 8422 / Vc1), this protein is Elongation factor 2 (fusA).